Here is a 118-residue protein sequence, read N- to C-terminus: Large ribosomal subunit protein bL19 (118 aa).

This sequence belongs to the bacterial ribosomal protein bL19 family.

In terms of biological role, this protein is located at the 30S-50S ribosomal subunit interface and may play a role in the structure and function of the aminoacyl-tRNA binding site. This chain is Large ribosomal subunit protein bL19, found in Campylobacter jejuni subsp. doylei (strain ATCC BAA-1458 / RM4099 / 269.97).